We begin with the raw amino-acid sequence, 469 residues long: MKTAKDVLKSIKDNDVKYVDLRFTDPRGKWQHVTFDVSMIDEDIFAEGTMFDGSSIAGWKAINESDMCLMPDPVTATIDPFFAETTMVITCDVLEPTTGEPYNRDPRGIAKKAEAMVKSMGVGDTVFVGPEAEFFVFDDVRFSSSPYNTGFRLDSSELPTNTDTEYEGGNLGHRVRTKGGYFPVPPQDSVQDMRSEMLGAMAKMGVKVEKHHHEVASAQHELGMKFDTLTLMADHLQIYKYCIHQVAHIYGKTATFMPKPVYGDNGSGMHVHQSIWKDGKPVFAGNKYADLSETCLHYIGGIIKHAKAINAFTNPSTNSYKRLVPGYEAPVLLAYSARNRSASCRIPYTASPKAKRVEVRFPDPLANPYLGFAAMLMAGLDGIKNKIDPGPAMDKDLYDLPKEELKQIPTVCGSLREALENLDKDRAFLKAGGVFDDDFIDSYIELKMTEVERFEMTPHPVEFDMYYSG.

Residues 14–98 (NDVKYVDLRF…ITCDVLEPTT (85 aa)) enclose the GS beta-grasp domain. Residues 106–469 (PRGIAKKAEA…PVEFDMYYSG (364 aa)) form the GS catalytic domain. Residues glutamate 131 and glutamate 133 each contribute to the Mg(2+) site. ATP is bound at residue glutamate 209. Mg(2+)-binding residues include glutamate 214 and glutamate 221. L-glutamate contacts are provided by residues 265–266 (NG) and glycine 266. Histidine 270 contributes to the Mg(2+) binding site. Residues 272 to 274 (HQS) and serine 274 contribute to the ATP site. Residues arginine 322, glutamate 328, and arginine 340 each contribute to the L-glutamate site. The ATP site is built by arginine 340, arginine 345, and lysine 353. Residue glutamate 358 coordinates Mg(2+). Residue arginine 360 coordinates L-glutamate. The residue at position 398 (tyrosine 398) is an O-AMP-tyrosine.

The protein belongs to the glutamine synthetase family. As to quaternary structure, oligomer of 12 subunits arranged in the form of two hexameric ring. Mg(2+) is required as a cofactor.

It is found in the cytoplasm. The enzyme catalyses L-glutamate + NH4(+) + ATP = L-glutamine + ADP + phosphate + H(+). With respect to regulation, the activity of this enzyme could be controlled by adenylation under conditions of abundant glutamine. Catalyzes the ATP-dependent biosynthesis of glutamine from glutamate and ammonia. The sequence is that of Glutamine synthetase from Bradyrhizobium diazoefficiens (strain JCM 10833 / BCRC 13528 / IAM 13628 / NBRC 14792 / USDA 110).